Here is a 320-residue protein sequence, read N- to C-terminus: Malate dehydrogenase (320 aa).

NAD(+)-binding positions include 10-15 (GSGMIG) and Asp-34. Substrate contacts are provided by Arg-83 and Arg-89. NAD(+)-binding positions include Asn-96 and 119-121 (ITN). Residues Asn-121 and Arg-152 each contribute to the substrate site. Residue His-176 is the Proton acceptor of the active site.

Belongs to the LDH/MDH superfamily. MDH type 3 family.

The catalysed reaction is (S)-malate + NAD(+) = oxaloacetate + NADH + H(+). Its function is as follows. Catalyzes the reversible oxidation of malate to oxaloacetate. The protein is Malate dehydrogenase of Rhizobium rhizogenes (strain K84 / ATCC BAA-868) (Agrobacterium radiobacter).